The chain runs to 383 residues: Probable mannan endo-1,4-beta-mannosidase A (383 aa).

Positions 1–21 (MKLSNALLTLASLALANVSTA) are cleaved as a signal peptide. N17 carries N-linked (GlcNAc...) asparagine glycosylation. W92 lines the substrate pocket. N194 carries an N-linked (GlcNAc...) asparagine glycan. N205 is a substrate binding site. E206 serves as the catalytic Proton donor. A glycan (N-linked (GlcNAc...) asparagine) is linked at N263. Y281 serves as a coordination point for substrate. Residue E314 is the Nucleophile of the active site. A substrate-binding site is contributed by W344.

The protein belongs to the glycosyl hydrolase 5 (cellulase A) family.

The protein localises to the secreted. The catalysed reaction is Random hydrolysis of (1-&gt;4)-beta-D-mannosidic linkages in mannans, galactomannans and glucomannans.. Functionally, endo-1,4-mannanase, a crucial enzyme for depolymerization of seed galactomannans and wood galactoglucomannans. This chain is Probable mannan endo-1,4-beta-mannosidase A (manA), found in Aspergillus niger (strain ATCC MYA-4892 / CBS 513.88 / FGSC A1513).